Consider the following 345-residue polypeptide: MQGYDIPRDVISLLKDAETYLAECLQNEKLSGRAREQRDEILHSFGQIRNRYGVEFALKGGEAAFTHTGQDDYDDIHNASYAPSQASDEVSVASDYVENDSEVEEELDKIFKQGYLERRKKDHGFFGSEWQKRWCVLTTRAFLYYSSEKGKQPKNGFLIKDSLAQMMPYIRKDSRRDSCFEVVTPNQQVFQFTAASPSDARDWVEQIQFLVKDTQSTIIPYEDDEETYDDIESTESSPVVGLTNDSENSLQEDDVYESIPGDEETEESEDENYEMKPGEPVIFYGDYYQGLWNCFSDNSDELSFERGDLIHILSKEYHAYGWWVGELDGIVGIVPKDYLTLAFDL.

One can recognise a PH domain in the interval 109–212 (KIFKQGYLER…WVEQIQFLVK (104 aa)). The disordered stretch occupies residues 226–274 (ETYDDIESTESSPVVGLTNDSENSLQEDDVYESIPGDEETEESEDENYE). Residues 250 to 272 (LQEDDVYESIPGDEETEESEDEN) are compositionally biased toward acidic residues. Residues 283 to 344 (FYGDYYQGLW…PKDYLTLAFD (62 aa)) form the SH3 domain.

The protein belongs to the SKAP family. In terms of assembly, homodimer. Phosphorylated on tyrosines.

The protein resides in the cytoplasm. It localises to the nucleus. It is found in the cell membrane. Positively regulates T-cell receptor signaling. Required for optimal conjugation between T-cells and antigen-presenting cells. The chain is Src kinase-associated phosphoprotein 1 (skap1) from Xenopus tropicalis (Western clawed frog).